A 724-amino-acid polypeptide reads, in one-letter code: MAQGCPITGLEVALTDLQSSQNNVRHHTEEISVDRLVVRRGQAFSITLYFKNRGFQPGMDSIMFVAETGPLPDLAKGTRAVFSFTGSGGPSPWIASLEANRANSLEVSLCAPPIAAVGRYLLKIRIDSYQGFVTAYQLGEFILLFNPWCPADSVYLESEPQRQEYVVNDYGFIYQGSKSWIRPCPWNYGQFEENIIDICLELLEKSLNFQVDPSTDCALRGSPVYTSRVVCAMINSNDDNGVLNGNWSENYVDGINPAEWTGSVAILKQWHATGCQPVRYGQCWVFAAVMCTVMRCLGIPTRVITNFDSGHDTDGNLIIDEYYDNTGRILENMKKDTVWNFHVWNECWMARKDLPPGYGGWQVLDATPQETSNGLYCCGPASVKAIKEGEIDLNYDTRFAFSMVNADCMSWLVYGGKEQKLHQDTATVGNFISTKSIQSDERDDITESYKYEEGSLQEREVFLKALQKLQATRSQGPHQANSNPFSSVPPRHNSARSPDSPSLQPSDVLQVSLKFELLDSPKMGQDINFVLLAVNMSPQFKDLKLNLSAQSLLHDGSPLVPFWQDTAFITLFPEEEKSYPCKILYSQYSQYLSTDKLIRISALGEEKNSPEKILVNKIITLTFPGIMINVLGAAFVNQPLTVQVVFSNPLSEPVEDCVLTLEGSGLFRKQQRVLIGVLKPHHKASITLKTVPFKSGQRQIQANLRSNRFKDIKGYKNVYVDIGL.

The residue at position 2 (Ala2) is an N-acetylalanine. Active-site residues include Cys283, His342, and Asp365. Ca(2+) contacts are provided by Asn405, Asp407, Glu453, and Glu458. Composition is skewed to polar residues over residues Arg473–Ser486 and Ala495–Pro505. Residues Arg473–Pro505 are disordered.

This sequence belongs to the transglutaminase superfamily. Transglutaminase family. The cofactor is Ca(2+).

The protein resides in the cytoplasm. It carries out the reaction L-glutaminyl-[protein] + L-lysyl-[protein] = [protein]-L-lysyl-N(6)-5-L-glutamyl-[protein] + NH4(+). Catalyzes the cross-linking of proteins and the conjugation of polyamines to proteins. Contributes to the formation of the cornified cell envelope of keratinocytes. The protein is Protein-glutamine gamma-glutamyltransferase 5 (Tgm5) of Mus musculus (Mouse).